Consider the following 296-residue polypeptide: NADH-ubiquinone oxidoreductase chain 2 (296 aa).

A run of 8 helical transmembrane segments spans residues 5–25, 49–69, 71–91, 114–134, 167–187, 209–229, 242–262, and 276–296; these read LCLF…GLWL, YFLI…NQSF, FLIP…MWLV, LLGL…SAFI, FFLM…AVIL, ASIS…GFFI, LLVL…FSIA, and KMEI…LFFL.

The protein belongs to the complex I subunit 2 family.

It localises to the mitochondrion inner membrane. It carries out the reaction a ubiquinone + NADH + 5 H(+)(in) = a ubiquinol + NAD(+) + 4 H(+)(out). Core subunit of the mitochondrial membrane respiratory chain NADH dehydrogenase (Complex I) that is believed to belong to the minimal assembly required for catalysis. Complex I functions in the transfer of electrons from NADH to the respiratory chain. The immediate electron acceptor for the enzyme is believed to be ubiquinone. The chain is NADH-ubiquinone oxidoreductase chain 2 (ND2) from Artemia franciscana (Brine shrimp).